We begin with the raw amino-acid sequence, 339 residues long: Ferrochelatase (339 aa).

Residues H202 and E283 each coordinate Fe cation.

This sequence belongs to the ferrochelatase family.

Its subcellular location is the cytoplasm. The enzyme catalyses heme b + 2 H(+) = protoporphyrin IX + Fe(2+). It participates in porphyrin-containing compound metabolism; protoheme biosynthesis; protoheme from protoporphyrin-IX: step 1/1. Catalyzes the ferrous insertion into protoporphyrin IX. This chain is Ferrochelatase, found in Psychrobacter arcticus (strain DSM 17307 / VKM B-2377 / 273-4).